Reading from the N-terminus, the 116-residue chain is Transcription initiation factor IIA subunit 2 (116 aa).

The protein belongs to the TFIIA subunit 2 family. In terms of assembly, TFIIA is a heterodimer composed of the large TOA1 and the small TOA2 subunits.

It localises to the nucleus. Functionally, TFIIA is a component of the transcription machinery of RNA polymerase II and plays an important role in transcriptional activation. TFIIA in a complex with tbp mediates transcriptional activity. The protein is Transcription initiation factor IIA subunit 2 (TOA2) of Pyricularia oryzae (strain 70-15 / ATCC MYA-4617 / FGSC 8958) (Rice blast fungus).